The primary structure comprises 485 residues: Dipeptide and tripeptide permease C (485 aa).

Topologically, residues 1–12 (MKTPSQPRAIYY) are cytoplasmic. The helical transmembrane segment at 13–33 (IVAIQIWEYFSFYGMRALLIL) threads the bilayer. Over 34–46 (YLTHQLGFDDNHA) the chain is Periplasmic. The chain crosses the membrane as a helical span at residues 47-67 (ISLFSAYASLVYVTPILGGWL). At 68-70 (ADR) the chain is on the cytoplasmic side. The chain crosses the membrane as a helical span at residues 71 to 93 (LLGNRTAVIAGALLMTLGHVVLG). Residues 94–102 (IDTNSTFSL) are Periplasmic-facing. A helical membrane pass occupies residues 103-125 (YLALAIIICGYGLFKSNISCLLG). The Cytoplasmic segment spans residues 126-140 (ELYDENDHRRDGGFS). A helical membrane pass occupies residues 141–161 (LLYAAGNIGSIAAPIACGLAA). Residues 162–164 (QWY) are Periplasmic-facing. A helical transmembrane segment spans residues 165-185 (GWHVGFALAGGGMFIGLLIFL). Residues 186–208 (SGHRHFQSTRSMDKKALTSVKFA) lie on the Cytoplasmic side of the membrane. Residues 209–229 (LPVWSWLVVMLCLAPVFFTLL) traverse the membrane as a helical segment. Topologically, residues 230 to 234 (LENDW) are periplasmic. Residues 235 to 255 (SGYLLAIVCLIAAQIIARMMI) form a helical membrane-spanning segment. Residues 256–262 (KFPEHRR) are Cytoplasmic-facing. Residues 263 to 283 (ALWQIVLLMFVGTLFWVLAQQ) form a helical membrane-spanning segment. Topologically, residues 284-307 (GGSTISLFIDRFVNRQAFNIEVPT) are periplasmic. Residues 308-328 (ALFQSVNAIAVMLAGVVLAWL) form a helical membrane-spanning segment. Topologically, residues 329-340 (ASPESRGNSTLR) are cytoplasmic. The helical transmembrane segment at 341 to 361 (VWLKFAFGLLLMACGFMLLAF) threads the bilayer. At 362 to 375 (DARHAAADGQASMG) the chain is on the periplasmic side. Residues 376-396 (VMISGLALMGFAELFIDPVAI) form a helical membrane-spanning segment. The Cytoplasmic portion of the chain corresponds to 397 to 406 (AQITRLKMSG). Residues 407–427 (VLTGIYMLATGAVANWLAGVV) form a helical membrane-spanning segment. Over 428–446 (AQQTTESQISGMAIAAYQR) the chain is Periplasmic. A helical membrane pass occupies residues 447–467 (FFSQMGEWTLACVAIIVVLAF). Over 468-485 (ATRFLFSTPTNMIQESND) the chain is Cytoplasmic.

It belongs to the major facilitator superfamily. Proton-dependent oligopeptide transporter (POT/PTR) (TC 2.A.17) family. As to quaternary structure, monomer.

The protein localises to the cell inner membrane. In terms of biological role, proton-dependent permease that transports di- and tripeptides. Shows significantly higher specificity towards dipeptides than tripeptides. Has a preference for dipeptides with a C-terminal Lys residue. Can bind Ala-Lys, Lys-Ala, Ala-Ala. Can also transport alanine and trialanine. The protein is Dipeptide and tripeptide permease C of Escherichia coli (strain K12).